Reading from the N-terminus, the 440-residue chain is 23S rRNA (uracil(1939)-C(5))-methyltransferase RlmD (440 aa).

A TRAM domain is found at 10 to 68; that stretch reads KSTQPQRIEFTVDSLDHHCVGIGRHQGKAIFIEGALPGELVKARILEDKKQYAHAALQQ. Residues Cys-81, Cys-87, Cys-90, and Cys-169 each coordinate [4Fe-4S] cluster. Positions 273, 302, 307, 323, 350, and 371 each coordinate S-adenosyl-L-methionine. The Nucleophile role is filled by Cys-397.

This sequence belongs to the class I-like SAM-binding methyltransferase superfamily. RNA M5U methyltransferase family. RlmD subfamily.

The enzyme catalyses uridine(1939) in 23S rRNA + S-adenosyl-L-methionine = 5-methyluridine(1939) in 23S rRNA + S-adenosyl-L-homocysteine + H(+). Catalyzes the formation of 5-methyl-uridine at position 1939 (m5U1939) in 23S rRNA. The protein is 23S rRNA (uracil(1939)-C(5))-methyltransferase RlmD of Aeromonas hydrophila subsp. hydrophila (strain ATCC 7966 / DSM 30187 / BCRC 13018 / CCUG 14551 / JCM 1027 / KCTC 2358 / NCIMB 9240 / NCTC 8049).